The following is a 611-amino-acid chain: E-selectin (611 aa).

The N-terminal stretch at 1-22 (MITSQLLPALTLVLLLFKEGGA) is a signal peptide. The region spanning 23-140 (WSYNASTEAM…CDKKKLALCY (118 aa)) is the C-type lectin domain. Over 23-557 (WSYNASTEAM…CEAPTESSIP (535 aa)) the chain is Extracellular. N-linked (GlcNAc...) asparagine glycosylation occurs at Asn-26. Disulfide bonds link Cys-41–Cys-139, Cys-112–Cys-131, Cys-144–Cys-155, Cys-149–Cys-164, Cys-166–Cys-175, Cys-181–Cys-225, Cys-194–Cys-207, Cys-211–Cys-238, Cys-243–Cys-287, Cys-256–Cys-269, Cys-273–Cys-300, Cys-305–Cys-350, Cys-336–Cys-363, Cys-368–Cys-413, Cys-399–Cys-426, Cys-431–Cys-476, Cys-462–Cys-489, Cys-494–Cys-535, and Cys-521–Cys-548. Residues Glu-102, Asn-104, and Glu-110 each contribute to the Ca(2+) site. A carbohydrate is bound by residues 102–110 (EPNNKQNDE), 114–119 (EIYIKR), and 127–129 (NDE). Ca(2+) is bound by residues Asn-127 and Asp-128. In terms of domain architecture, EGF-like spans 141–176 (TAACTPTSCSGHGECVETVNNYTCKCHPGFRGLRCE). A glycan (N-linked (GlcNAc...) asparagine) is linked at Asn-161. 2 consecutive Sushi domains span residues 179–240 (VTCQ…ACNV) and 241–302 (VECS…TCKA). The N-linked (GlcNAc...) asparagine glycan is linked to Asn-204. Residue Asn-266 is glycosylated (N-linked (GlcNAc...) asparagine). Asn-313 and Asn-333 each carry an N-linked (GlcNAc...) asparagine glycan. Sushi domains are found at residues 316–365 (VSCS…VCKA), 367–428 (QCKA…TCEA), 430–491 (KCDA…SCQV), and 492–550 (VQCF…TCEA). N-linked (GlcNAc...) asparagine glycosylation occurs at Asn-528. A helical transmembrane segment spans residues 558 to 579 (LAVGLTAGGTSLLTVASFLLWL). The Cytoplasmic portion of the chain corresponds to 580–611 (LKRLRKRAKKFVPASSCQSLQSDGSYHMPCSI).

This sequence belongs to the selectin/LECAM family. As to quaternary structure, interacts with SELPLG/PSGL1 and PODXL2 through the sialyl Lewis X epitope. SELPLG sulfation appears not to be required for this interaction.

It is found in the cell membrane. Functionally, cell-surface glycoprotein having a role in immunoadhesion. Mediates in the adhesion of blood neutrophils in cytokine-activated endothelium through interaction with SELPLG/PSGL1. May have a role in capillary morphogenesis. This Canis lupus familiaris (Dog) protein is E-selectin (SELE).